The following is a 234-amino-acid chain: Ubiquitin thioesterase OTUB2 (234 aa).

The OTU domain maps to 40–231 (TSIRKTKGDG…TSHYNILYAA (192 aa)). Asp-48 is a catalytic residue. Catalysis depends on Cys-51, which acts as the Nucleophile. Catalysis depends on residues His-205 and His-224.

Belongs to the peptidase C65 family.

It carries out the reaction Thiol-dependent hydrolysis of ester, thioester, amide, peptide and isopeptide bonds formed by the C-terminal Gly of ubiquitin (a 76-residue protein attached to proteins as an intracellular targeting signal).. Hydrolase that can remove conjugated ubiquitin from proteins in vitro and may therefore play an important regulatory role at the level of protein turnover by preventing degradation. Mediates deubiquitination of 'Lys-11'-,'Lys-48'- and 'Lys-63'-linked polyubiquitin chains, with a preference for 'Lys-63'-linked polyubiquitin chains. The sequence is that of Ubiquitin thioesterase OTUB2 (Otub2) from Mus musculus (Mouse).